Consider the following 186-residue polypeptide: Large ribosomal subunit protein uL10 (186 aa).

In terms of assembly, part of the ribosomal stalk of the 50S ribosomal subunit. The N-terminus interacts with L11 and the large rRNA to form the base of the stalk. The C-terminus forms an elongated spine to which L12 dimers bind in a sequential fashion forming a multimeric L10(L12)X complex.

Forms part of the ribosomal stalk, playing a central role in the interaction of the ribosome with GTP-bound translation factors. The polypeptide is Large ribosomal subunit protein uL10 (Rhodopseudomonas palustris (strain ATCC BAA-98 / CGA009)).